The chain runs to 901 residues: HTH-type transcriptional regulator MalT (901 aa).

39–46 contacts ATP; it reads SPAGYGKT. Residues 829–894 form the HTH luxR-type domain; sequence ELIRTSPLTQ…AAVQHAQKLL (66 aa). A DNA-binding region (H-T-H motif) is located at residues 853-872; that stretch reads NEQIAGELEVAATTIKTHIR.

It belongs to the MalT family. In terms of assembly, monomer in solution. Oligomerizes to an active state in the presence of the positive effectors ATP and maltotriose.

Activated by ATP and maltotriose, which are both required for DNA binding. Its function is as follows. Positively regulates the transcription of the maltose regulon whose gene products are responsible for uptake and catabolism of malto-oligosaccharides. Specifically binds to the promoter region of its target genes, recognizing a short DNA motif called the MalT box. This chain is HTH-type transcriptional regulator MalT, found in Shigella boydii serotype 4 (strain Sb227).